A 171-amino-acid polypeptide reads, in one-letter code: S-ribosylhomocysteine lyase (171 aa).

The Fe cation site is built by histidine 54, histidine 58, and cysteine 128.

This sequence belongs to the LuxS family. In terms of assembly, homodimer. Requires Fe cation as cofactor.

The enzyme catalyses S-(5-deoxy-D-ribos-5-yl)-L-homocysteine = (S)-4,5-dihydroxypentane-2,3-dione + L-homocysteine. Functionally, involved in the synthesis of autoinducer 2 (AI-2) which is secreted by bacteria and is used to communicate both the cell density and the metabolic potential of the environment. The regulation of gene expression in response to changes in cell density is called quorum sensing. Catalyzes the transformation of S-ribosylhomocysteine (RHC) to homocysteine (HC) and 4,5-dihydroxy-2,3-pentadione (DPD). This Aliarcobacter butzleri (strain RM4018) (Arcobacter butzleri) protein is S-ribosylhomocysteine lyase.